The primary structure comprises 86 residues: Small ribosomal subunit protein bS20 (86 aa).

This sequence belongs to the bacterial ribosomal protein bS20 family.

Its function is as follows. Binds directly to 16S ribosomal RNA. This chain is Small ribosomal subunit protein bS20, found in Sulfurimonas denitrificans (strain ATCC 33889 / DSM 1251) (Thiomicrospira denitrificans (strain ATCC 33889 / DSM 1251)).